The chain runs to 244 residues: 5-oxoprolinase subunit A (244 aa).

The protein belongs to the LamB/PxpA family. As to quaternary structure, forms a complex composed of PxpA, PxpB and PxpC.

It catalyses the reaction 5-oxo-L-proline + ATP + 2 H2O = L-glutamate + ADP + phosphate + H(+). In terms of biological role, catalyzes the cleavage of 5-oxoproline to form L-glutamate coupled to the hydrolysis of ATP to ADP and inorganic phosphate. The polypeptide is 5-oxoprolinase subunit A (Escherichia coli O17:K52:H18 (strain UMN026 / ExPEC)).